The following is a 1432-amino-acid chain: Superkiller protein 3 (1432 aa).

TPR repeat units lie at residues 4 to 37 and 47 to 80; these read IKQL…DPDN and ALSS…VPDN. The segment at 339–397 is disordered; it reads SANKPPEGHKKTEKETDIKDVDETNEDEVKDRVEDEVKDRVEDEVKDQDEEAKEDEEED. The span at 344-381 shows a compositional bias: basic and acidic residues; sequence PEGHKKTEKETDIKDVDETNEDEVKDRVEDEVKDRVED. Acidic residues predominate over residues 382–397; the sequence is EVKDQDEEAKEDEEED. TPR repeat units follow at residues 425 to 458, 471 to 507, 508 to 541, 627 to 661, 702 to 735, 736 to 769, 945 to 985, 987 to 1018, and 1226 to 1259; these read ILAH…IAYN, REFS…DFSN, IQAK…SPNN, APGF…DAGD, NWPF…DPND, VESW…RPSH, ASYW…QSNT, ETWI…EPKA, and ISNH…SKDS.

The protein belongs to the SKI3 family. In terms of assembly, component of the SKI complex composed of at least SKI2, SKI3 and SKI8. The SKI complex interacts with SKI7, which makes the link between the SKI complex and the exosome in order to perform mRNA degradation.

The protein localises to the cytoplasm. It is found in the nucleus. In terms of biological role, component of the SKI complex involved in 3'-mRNA degradation pathway. Represses dsRNA virus propagation by specifically blocking translation of viral mRNAs, perhaps recognizing the absence of CAP or poly(A). Essential for cell growth only in the presence of M1 replicon. The protein is Superkiller protein 3 (SKI3) of Saccharomyces cerevisiae (strain ATCC 204508 / S288c) (Baker's yeast).